Here is a 157-residue protein sequence, read N- to C-terminus: Peptide methionine sulfoxide reductase MsrA (157 aa).

Residue Cys10 is part of the active site.

The protein belongs to the MsrA Met sulfoxide reductase family.

It catalyses the reaction L-methionyl-[protein] + [thioredoxin]-disulfide + H2O = L-methionyl-(S)-S-oxide-[protein] + [thioredoxin]-dithiol. The enzyme catalyses [thioredoxin]-disulfide + L-methionine + H2O = L-methionine (S)-S-oxide + [thioredoxin]-dithiol. Has an important function as a repair enzyme for proteins that have been inactivated by oxidation. Catalyzes the reversible oxidation-reduction of methionine sulfoxide in proteins to methionine. This chain is Peptide methionine sulfoxide reductase MsrA, found in Clostridium perfringens (strain ATCC 13124 / DSM 756 / JCM 1290 / NCIMB 6125 / NCTC 8237 / Type A).